We begin with the raw amino-acid sequence, 150 residues long: Large ribosomal subunit protein eL19 (150 aa).

The tract at residues 59-89 (SRYRARIRHEQKKKGRHRGPGSRKGKKTARM) is disordered. Over residues 61–89 (YRARIRHEQKKKGRHRGPGSRKGKKTARM) the composition is skewed to basic residues.

This sequence belongs to the eukaryotic ribosomal protein eL19 family. Part of the 50S ribosomal subunit.

Its function is as follows. Binds to the 23S rRNA. The sequence is that of Large ribosomal subunit protein eL19 from Pyrococcus horikoshii (strain ATCC 700860 / DSM 12428 / JCM 9974 / NBRC 100139 / OT-3).